The following is a 307-amino-acid chain: Methionyl-tRNA formyltransferase (307 aa).

Position 108–111 (108–111 (SLLP)) interacts with (6S)-5,6,7,8-tetrahydrofolate.

It belongs to the Fmt family.

The enzyme catalyses L-methionyl-tRNA(fMet) + (6R)-10-formyltetrahydrofolate = N-formyl-L-methionyl-tRNA(fMet) + (6S)-5,6,7,8-tetrahydrofolate + H(+). Functionally, attaches a formyl group to the free amino group of methionyl-tRNA(fMet). The formyl group appears to play a dual role in the initiator identity of N-formylmethionyl-tRNA by promoting its recognition by IF2 and preventing the misappropriation of this tRNA by the elongation apparatus. In Xylella fastidiosa (strain M23), this protein is Methionyl-tRNA formyltransferase.